A 285-amino-acid polypeptide reads, in one-letter code: MLYLVGLGLADERDITVRGLEVVKKAERVYLEAYTAILLVDKAKLEAFYGRPVIEADRELVETGSDDILANADKVDVAFLVVGDPFGATTHTDLVLRARELGIESKVIPNASIMSGIGCTGLQLYNFGQTVSMVFFTETWKPSSYYDRVKENVQIGLHTLVLLDIKVKEQSLENMARGRLIYEPPRFMTVAQCAAQMLETEEERQEGVWGPDSLAVGAARVGAEDQKLVAGTLQELTQVDMGRPLHSLVLLGRRAHDLEKDYIRRFAVDEATFDAAWQNGKYGSS.

S-adenosyl-L-methionine is bound by residues leucine 9, aspartate 84, glycine 87, 112–113, leucine 163, valine 221, and histidine 246; that span reads SI.

This sequence belongs to the diphthine synthase family.

The protein localises to the cytoplasm. The catalysed reaction is 2-[(3S)-amino-3-carboxypropyl]-L-histidyl-[translation elongation factor 2] + 4 S-adenosyl-L-methionine = diphthine methyl ester-[translation elongation factor 2] + 4 S-adenosyl-L-homocysteine + 3 H(+). It functions in the pathway protein modification; peptidyl-diphthamide biosynthesis. Functionally, S-adenosyl-L-methionine-dependent methyltransferase that catalyzes four methylations of the modified target histidine residue in translation elongation factor 2 (EF-2), to form an intermediate called diphthine methyl ester. The four successive methylation reactions represent the second step of diphthamide biosynthesis. The chain is Diphthine methyl ester synthase (dph5) from Emericella nidulans (strain FGSC A4 / ATCC 38163 / CBS 112.46 / NRRL 194 / M139) (Aspergillus nidulans).